Reading from the N-terminus, the 257-residue chain is MALAKRIIPCLDVDKGRVVKGVNFVDIRDAGDPVEVARRYNEQGADEITFLDITASSESRDTTYETVERMAAEVFIPLTVGGGVRTVDDIRKLLNAGADKVSINTAAVFNPEFVREAAERFGRQCIVVAIDAKRVSAAGEEPRWEIFTHGGRKPTGLDAVEWAKKMVELGAGELLLTSMDRDGTKIGFDLGLTRAISDAVVVPVIASGGVGELQHLADGVTQGGADAVLAASIFHFGQHTIPEAKAFMKAQGIEVRD.

Catalysis depends on residues D12 and D131.

It belongs to the HisA/HisF family. Heterodimer of HisH and HisF.

It localises to the cytoplasm. It catalyses the reaction 5-[(5-phospho-1-deoxy-D-ribulos-1-ylimino)methylamino]-1-(5-phospho-beta-D-ribosyl)imidazole-4-carboxamide + L-glutamine = D-erythro-1-(imidazol-4-yl)glycerol 3-phosphate + 5-amino-1-(5-phospho-beta-D-ribosyl)imidazole-4-carboxamide + L-glutamate + H(+). It participates in amino-acid biosynthesis; L-histidine biosynthesis; L-histidine from 5-phospho-alpha-D-ribose 1-diphosphate: step 5/9. In terms of biological role, IGPS catalyzes the conversion of PRFAR and glutamine to IGP, AICAR and glutamate. The HisF subunit catalyzes the cyclization activity that produces IGP and AICAR from PRFAR using the ammonia provided by the HisH subunit. In Marinobacter nauticus (strain ATCC 700491 / DSM 11845 / VT8) (Marinobacter aquaeolei), this protein is Imidazole glycerol phosphate synthase subunit HisF.